A 298-amino-acid chain; its full sequence is NADH-cytochrome b5 reductase 2 (298 aa).

Residues 15-38 (FVLPVAAAAVGLASYSFTSSSFIA) form a helical membrane-spanning segment. Residues 49–153 (DEWIDLKLIS…KGPFVKWKWE (105 aa)) enclose the FAD-binding FR-type domain. Residue 156–191 (QFKSIALIGGGTGITPLYQLIHEITKNPADKTQVSL) participates in FAD binding.

The protein belongs to the flavoprotein pyridine nucleotide cytochrome reductase family. Requires FAD as cofactor.

The protein resides in the mitochondrion outer membrane. It catalyses the reaction 2 Fe(III)-[cytochrome b5] + NADH = 2 Fe(II)-[cytochrome b5] + NAD(+) + H(+). Its function is as follows. May mediate the reduction of outer membrane cytochrome b5. This is NADH-cytochrome b5 reductase 2 (MCR1) from Scheffersomyces stipitis (strain ATCC 58785 / CBS 6054 / NBRC 10063 / NRRL Y-11545) (Yeast).